The following is a 443-amino-acid chain: Thymidine phosphorylase (443 aa).

The protein belongs to the thymidine/pyrimidine-nucleoside phosphorylase family. Homodimer.

The catalysed reaction is thymidine + phosphate = 2-deoxy-alpha-D-ribose 1-phosphate + thymine. It functions in the pathway pyrimidine metabolism; dTMP biosynthesis via salvage pathway; dTMP from thymine: step 1/2. In terms of biological role, the enzymes which catalyze the reversible phosphorolysis of pyrimidine nucleosides are involved in the degradation of these compounds and in their utilization as carbon and energy sources, or in the rescue of pyrimidine bases for nucleotide synthesis. The chain is Thymidine phosphorylase from Shewanella frigidimarina (strain NCIMB 400).